Here is a 170-residue protein sequence, read N- to C-terminus: Protein GrpE (170 aa).

Positions 1-29 (MSEEIKNEEIVEEVEATEEVVETPEKSEL) are disordered. The span at 10–22 (IVEEVEATEEVVE) shows a compositional bias: acidic residues.

It belongs to the GrpE family. As to quaternary structure, homodimer.

It is found in the cytoplasm. Its function is as follows. Participates actively in the response to hyperosmotic and heat shock by preventing the aggregation of stress-denatured proteins, in association with DnaK and GrpE. It is the nucleotide exchange factor for DnaK and may function as a thermosensor. Unfolded proteins bind initially to DnaJ; upon interaction with the DnaJ-bound protein, DnaK hydrolyzes its bound ATP, resulting in the formation of a stable complex. GrpE releases ADP from DnaK; ATP binding to DnaK triggers the release of the substrate protein, thus completing the reaction cycle. Several rounds of ATP-dependent interactions between DnaJ, DnaK and GrpE are required for fully efficient folding. The polypeptide is Protein GrpE (Streptococcus suis (strain 98HAH33)).